A 555-amino-acid polypeptide reads, in one-letter code: Glutamate--tRNA ligase (555 aa).

Positions 100–110 match the 'HIGH' region motif; that stretch reads PNPSGPLHIGH.

Belongs to the class-I aminoacyl-tRNA synthetase family. Glutamate--tRNA ligase type 2 subfamily.

It is found in the cytoplasm. It catalyses the reaction tRNA(Glu) + L-glutamate + ATP = L-glutamyl-tRNA(Glu) + AMP + diphosphate. Functionally, catalyzes the attachment of glutamate to tRNA(Glu) in a two-step reaction: glutamate is first activated by ATP to form Glu-AMP and then transferred to the acceptor end of tRNA(Glu). This chain is Glutamate--tRNA ligase, found in Methanococcus maripaludis (strain DSM 14266 / JCM 13030 / NBRC 101832 / S2 / LL).